We begin with the raw amino-acid sequence, 76 residues long: Acyl carrier protein (76 aa).

One can recognise a Carrier domain in the interval 1 to 76 (MSIEERVKKI…SAIDYVQNNQ (76 aa)). An O-(pantetheine 4'-phosphoryl)serine modification is found at serine 36.

Belongs to the acyl carrier protein (ACP) family. 4'-phosphopantetheine is transferred from CoA to a specific serine of apo-ACP by AcpS. This modification is essential for activity because fatty acids are bound in thioester linkage to the sulfhydryl of the prosthetic group.

It is found in the cytoplasm. Its pathway is lipid metabolism; fatty acid biosynthesis. Functionally, carrier of the growing fatty acid chain in fatty acid biosynthesis. The sequence is that of Acyl carrier protein from Haemophilus influenzae (strain 86-028NP).